The following is a 107-amino-acid chain: Phosphoribosyl-ATP pyrophosphatase (107 aa).

It belongs to the PRA-PH family.

The protein resides in the cytoplasm. It carries out the reaction 1-(5-phospho-beta-D-ribosyl)-ATP + H2O = 1-(5-phospho-beta-D-ribosyl)-5'-AMP + diphosphate + H(+). The protein operates within amino-acid biosynthesis; L-histidine biosynthesis; L-histidine from 5-phospho-alpha-D-ribose 1-diphosphate: step 2/9. The sequence is that of Phosphoribosyl-ATP pyrophosphatase from Bacillus anthracis (strain A0248).